Consider the following 116-residue polypeptide: MSSGLDPAIAARLKRTPDGLVAAVAQQRGTGEVLMMAWMDDEALHRTLTTRKGTYYSRSRQQYWVKGETSGHTQHVHEVRLDCDGDTVLLVVDQVDGACHTGDRTCFDADVLLAES.

Residue aspartate 82 coordinates Mg(2+). Cysteine 83 serves as a coordination point for Zn(2+). 2 residues coordinate Mg(2+): aspartate 84 and aspartate 86. 2 residues coordinate Zn(2+): cysteine 99 and cysteine 106.

It belongs to the PRA-CH family. In terms of assembly, homodimer. Mg(2+) serves as cofactor. Zn(2+) is required as a cofactor.

The protein localises to the cytoplasm. It carries out the reaction 1-(5-phospho-beta-D-ribosyl)-5'-AMP + H2O = 1-(5-phospho-beta-D-ribosyl)-5-[(5-phospho-beta-D-ribosylamino)methylideneamino]imidazole-4-carboxamide. It participates in amino-acid biosynthesis; L-histidine biosynthesis; L-histidine from 5-phospho-alpha-D-ribose 1-diphosphate: step 3/9. Catalyzes the hydrolysis of the adenine ring of phosphoribosyl-AMP. The polypeptide is Phosphoribosyl-AMP cyclohydrolase (Saccharopolyspora erythraea (strain ATCC 11635 / DSM 40517 / JCM 4748 / NBRC 13426 / NCIMB 8594 / NRRL 2338)).